Here is a 478-residue protein sequence, read N- to C-terminus: Solute carrier family 49 member 4 (478 aa).

A disordered region spans residues 1–27; that stretch reads MGSGWSSEEEERQPLLGPGLGPAPGAA. The Cytoplasmic portion of the chain corresponds to 1 to 51; that stretch reads MGSGWSSEEEERQPLLGPGLGPAPGAARRGREATAVLPAAGPNPGRVYGRR. Positions 15–16 match the Di-leucine motif; mediates lysosomal localization motif; that stretch reads LL. The helical transmembrane segment at 52 to 72 threads the bilayer; the sequence is WLVLLLFSLLAFAQGLVWNTW. The Lumenal portion of the chain corresponds to 73–89; that stretch reads GPIQNSARQAYGFSGWD. Residues 90 to 110 traverse the membrane as a helical segment; sequence IALLVLWGPIGFLPCFAFMWL. Over 111-117 the chain is Cytoplasmic; sequence LDKRGLR. A helical membrane pass occupies residues 118–138; sequence VTVLLTSFLMVLGTGLRCIPV. Residues 139-152 lie on the Lumenal side of the membrane; that stretch reads SDLALKKRLIHGGQ. A helical membrane pass occupies residues 153–173; it reads ILNGLAGPTVMNAAPFLSTTW. The Cytoplasmic portion of the chain corresponds to 174 to 184; it reads FSADERATATA. The chain crosses the membrane as a helical span at residues 185–205; the sequence is IASMLSYLGGACAFLVGPLVV. The Lumenal segment spans residues 206-229; the sequence is PAPNGTAPLLAAESSRAHIKDRIE. N-linked (GlcNAc...) asparagine glycosylation is present at N209. A helical transmembrane segment spans residues 230 to 250; it reads TVLYAEFGVVCLIFSATLAYF. Over 251-281 the chain is Cytoplasmic; the sequence is PPRPPLPPSVAAASQRLSYRRSFCRLLSNLR. The helical transmembrane segment at 282–302 threads the bilayer; the sequence is FLMIALAYAIPLGVFAGWSGV. Residues 303–314 are Lumenal-facing; sequence LDLILTPVHVSQ. A helical transmembrane segment spans residues 315-335; the sequence is VDAGWIGFWSIVGGCVVGIAM. Residues 336–347 are Cytoplasmic-facing; sequence ARFADFIRGMLK. A helical membrane pass occupies residues 348–368; that stretch reads LILLLLFSGATLSSTWFTLTC. Over 369 to 384 the chain is Lumenal; that stretch reads LNSITHLPLTTVTLYA. The chain crosses the membrane as a helical span at residues 385 to 405; sequence SCILLGVFLNSSVPIFFELFV. Residues 406–414 are Cytoplasmic-facing; it reads ETVYPVPEG. The chain crosses the membrane as a helical span at residues 415 to 435; the sequence is ITCGVVTFLSNMFMGVLLFFV. Residues 436-442 lie on the Lumenal side of the membrane; that stretch reads TFYHTEL. A helical transmembrane segment spans residues 443-463; it reads SWFNWCLPGSCLLSLLLILCF. Residues 464 to 478 are Cytoplasmic-facing; that stretch reads RESYDRLYLDVVVSV.

This sequence belongs to the major facilitator superfamily. In terms of processing, cleaved in lysosomes by cathepsin L between Leu-214 and Ala-261, generating a N-glycosylated N-terminal and a non-glycosylated C-terminal fragment.

It is found in the lysosome membrane. It catalyses the reaction pyridoxine(out) + n H(+)(out) = pyridoxine(in) + n H(+)(in). Mediates H(+)-dependent pyridoxine transport. The polypeptide is Solute carrier family 49 member 4 (Slc49a4) (Mus musculus (Mouse)).